Reading from the N-terminus, the 326-residue chain is (+)-T-muurolol synthase ((2E,6E)-farnesyl diphosphate cyclizing) (326 aa).

2 residues coordinate Mg(2+): Asp81 and Asp85. A DDXXD motif motif is present at residues 81-85 (DDQCD). Arg175 serves as a coordination point for substrate. Residues Asn221 and Ser225 each contribute to the Mg(2+) site. Lys228 lines the substrate pocket. Residue Glu229 participates in Mg(2+) binding. 309–310 (RY) contributes to the substrate binding site.

The protein belongs to the terpene synthase family. Requires Mg(2+) as cofactor.

It catalyses the reaction (2E,6E)-farnesyl diphosphate + H2O = (+)-T-muurolol + diphosphate. Its pathway is secondary metabolite biosynthesis; terpenoid biosynthesis. Its function is as follows. Catalyzes the conversion of (2E,6E)-farnesyl diphosphate (FPP) into (+)-T-muurolol via a 1,10-cyclization, which requires isomerization of FPP to nerolidyl diphosphate (NPP) and then abstraction of the pyrophosphate from intermediate NPP leading to a (E,Z)-germacradienyl (helminthogermacradienyl) cation. This is (+)-T-muurolol synthase ((2E,6E)-farnesyl diphosphate cyclizing) from Roseiflexus castenholzii (strain DSM 13941 / HLO8).